Reading from the N-terminus, the 156-residue chain is H/ACA ribonucleoprotein complex subunit 2-like protein (156 aa).

Belongs to the eukaryotic ribosomal protein eL8 family. In terms of assembly, component of the small nucleolar ribonucleoprotein particle containing H/ACA-type snoRNAs (H/ACA snoRNPs).

It localises to the nucleus. It is found in the nucleolus. Its function is as follows. Required for ribosome biogenesis. Part of a complex which catalyzes pseudouridylation of rRNA. This involves the isomerization of uridine such that the ribose is subsequently attached to C5, instead of the normal N1. Pseudouridine ('psi') residues may serve to stabilize the conformation of rRNAs. The chain is H/ACA ribonucleoprotein complex subunit 2-like protein from Arabidopsis thaliana (Mouse-ear cress).